The following is a 275-amino-acid chain: 2,3,4,5-tetrahydropyridine-2,6-dicarboxylate N-succinyltransferase (275 aa).

The substrate site is built by Arg-104 and Asp-141.

This sequence belongs to the transferase hexapeptide repeat family. In terms of assembly, homotrimer.

The protein resides in the cytoplasm. The enzyme catalyses (S)-2,3,4,5-tetrahydrodipicolinate + succinyl-CoA + H2O = (S)-2-succinylamino-6-oxoheptanedioate + CoA. It participates in amino-acid biosynthesis; L-lysine biosynthesis via DAP pathway; LL-2,6-diaminopimelate from (S)-tetrahydrodipicolinate (succinylase route): step 1/3. The polypeptide is 2,3,4,5-tetrahydropyridine-2,6-dicarboxylate N-succinyltransferase (Aeromonas hydrophila subsp. hydrophila (strain ATCC 7966 / DSM 30187 / BCRC 13018 / CCUG 14551 / JCM 1027 / KCTC 2358 / NCIMB 9240 / NCTC 8049)).